Here is a 363-residue protein sequence, read N- to C-terminus: tRNA N6-adenosine threonylcarbamoyltransferase (363 aa).

Fe cation is bound by residues His-121 and His-125. Substrate is bound by residues 143–147 (LASGG), Asp-176, Gly-189, and Asn-287. Asp-315 contacts Fe cation.

This sequence belongs to the KAE1 / TsaD family. Requires Fe(2+) as cofactor.

The protein resides in the cytoplasm. The enzyme catalyses L-threonylcarbamoyladenylate + adenosine(37) in tRNA = N(6)-L-threonylcarbamoyladenosine(37) in tRNA + AMP + H(+). Functionally, required for the formation of a threonylcarbamoyl group on adenosine at position 37 (t(6)A37) in tRNAs that read codons beginning with adenine. Is involved in the transfer of the threonylcarbamoyl moiety of threonylcarbamoyl-AMP (TC-AMP) to the N6 group of A37, together with TsaE and TsaB. TsaD likely plays a direct catalytic role in this reaction. The chain is tRNA N6-adenosine threonylcarbamoyltransferase from Rhodopseudomonas palustris (strain BisB5).